A 177-amino-acid chain; its full sequence is Large ribosomal subunit protein uL6 (177 aa).

Belongs to the universal ribosomal protein uL6 family. Part of the 50S ribosomal subunit.

Functionally, this protein binds to the 23S rRNA, and is important in its secondary structure. It is located near the subunit interface in the base of the L7/L12 stalk, and near the tRNA binding site of the peptidyltransferase center. This Shewanella baltica (strain OS223) protein is Large ribosomal subunit protein uL6.